A 357-amino-acid chain; its full sequence is Neuronal-specific septin-3 (357 aa).

Residues 1 to 10 show a composition bias toward basic and acidic residues; that stretch reads MSKGLPETRT. The segment at 1-29 is disordered; it reads MSKGLPETRTDAAMSELVPEPRPKPAVPM. A Septin-type G domain is found at 58–330; it reads TGFDFNIMVV…ETYRAKRLND (273 aa). Residues 68–75 form a G1 motif region; that stretch reads GQSGLGKS. 68–75 serves as a coordination point for GTP; that stretch reads GQSGLGKS. S91 is subject to Phosphoserine. Position 102 (T102) interacts with GTP. Residues 125–128 are G3 motif; it reads DTPG. Positions 207-210 are G4 motif; sequence AKAD. Residues 208-216, G264, and R279 contribute to the GTP site; that span reads KADTMTLEE.

It belongs to the TRAFAC class TrmE-Era-EngA-EngB-Septin-like GTPase superfamily. Septin GTPase family. As to quaternary structure, septins polymerize into heterooligomeric protein complexes that form filaments, and can associate with cellular membranes, actin filaments and microtubules. GTPase activity is required for filament formation. In terms of processing, phosphorylated by PKG on serine residues. Phosphorylated by PKG on Ser-91.

It is found in the cytoplasm. It localises to the cytoskeleton. Its subcellular location is the synapse. In terms of biological role, filament-forming cytoskeletal GTPase. May play a role in cytokinesis (Potential). In Bos taurus (Bovine), this protein is Neuronal-specific septin-3.